A 159-amino-acid polypeptide reads, in one-letter code: 2-C-methyl-D-erythritol 2,4-cyclodiphosphate synthase (159 aa).

A divalent metal cation contacts are provided by D10 and H12. 4-CDP-2-C-methyl-D-erythritol 2-phosphate-binding positions include 10 to 12 (DVH) and 36 to 37 (HS). H44 is an a divalent metal cation binding site. 4-CDP-2-C-methyl-D-erythritol 2-phosphate-binding positions include 58–60 (DIG), 134–137 (TTSE), F141, and R144.

The protein belongs to the IspF family. In terms of assembly, homotrimer. A divalent metal cation serves as cofactor.

It carries out the reaction 4-CDP-2-C-methyl-D-erythritol 2-phosphate = 2-C-methyl-D-erythritol 2,4-cyclic diphosphate + CMP. The protein operates within isoprenoid biosynthesis; isopentenyl diphosphate biosynthesis via DXP pathway; isopentenyl diphosphate from 1-deoxy-D-xylulose 5-phosphate: step 4/6. Its function is as follows. Involved in the biosynthesis of isopentenyl diphosphate (IPP) and dimethylallyl diphosphate (DMAPP), two major building blocks of isoprenoid compounds. Catalyzes the conversion of 4-diphosphocytidyl-2-C-methyl-D-erythritol 2-phosphate (CDP-ME2P) to 2-C-methyl-D-erythritol 2,4-cyclodiphosphate (ME-CPP) with a corresponding release of cytidine 5-monophosphate (CMP). This chain is 2-C-methyl-D-erythritol 2,4-cyclodiphosphate synthase, found in Cereibacter sphaeroides (strain ATCC 17025 / ATH 2.4.3) (Rhodobacter sphaeroides).